The primary structure comprises 318 residues: Aspartate carbamoyltransferase catalytic subunit (318 aa).

The carbamoyl phosphate site is built by Arg58 and Thr59. An L-aspartate-binding site is contributed by Lys86. Residues Arg108, His141, and Gln144 each contribute to the carbamoyl phosphate site. L-aspartate-binding residues include Arg174 and Arg226. Residues Gly270 and Pro271 each coordinate carbamoyl phosphate.

Belongs to the aspartate/ornithine carbamoyltransferase superfamily. ATCase family. Heterododecamer (2C3:3R2) of six catalytic PyrB chains organized as two trimers (C3), and six regulatory PyrI chains organized as three dimers (R2).

The enzyme catalyses carbamoyl phosphate + L-aspartate = N-carbamoyl-L-aspartate + phosphate + H(+). The protein operates within pyrimidine metabolism; UMP biosynthesis via de novo pathway; (S)-dihydroorotate from bicarbonate: step 2/3. Catalyzes the condensation of carbamoyl phosphate and aspartate to form carbamoyl aspartate and inorganic phosphate, the committed step in the de novo pyrimidine nucleotide biosynthesis pathway. The protein is Aspartate carbamoyltransferase catalytic subunit of Lactobacillus delbrueckii subsp. bulgaricus (strain ATCC BAA-365 / Lb-18).